The chain runs to 465 residues: Spermidine/putrescine import ATP-binding protein PotA (465 aa).

Residues 1–18 (MTATSGARTSDARTSGAR) show a composition bias toward polar residues. The tract at residues 1–21 (MTATSGARTSDARTSGARTSD) is disordered. The ABC transporter domain maps to 30–264 (IELVGVAKDY…PRTRFVAGFI (235 aa)). 66–73 (GPSGCGKS) is an ATP binding site.

The protein belongs to the ABC transporter superfamily. Spermidine/putrescine importer (TC 3.A.1.11.1) family. In terms of assembly, the complex is composed of two ATP-binding proteins (PotA), two transmembrane proteins (PotB and PotC) and a solute-binding protein (PotD).

It is found in the cell membrane. The catalysed reaction is ATP + H2O + polyamine-[polyamine-binding protein]Side 1 = ADP + phosphate + polyamineSide 2 + [polyamine-binding protein]Side 1.. Part of the ABC transporter complex PotABCD involved in spermidine/putrescine import. Responsible for energy coupling to the transport system. The polypeptide is Spermidine/putrescine import ATP-binding protein PotA (Frankia alni (strain DSM 45986 / CECT 9034 / ACN14a)).